Consider the following 166-residue polypeptide: Large ribosomal subunit protein bL17 (166 aa).

The disordered stretch occupies residues 122-166 (PESAPVKAKQDRSKRVRGSKKTQEGSEKAEVSASAGEAAAVTEEK). Residues 142–151 (KTQEGSEKAE) are compositionally biased toward basic and acidic residues. The segment covering 152–166 (VSASAGEAAAVTEEK) has biased composition (low complexity).

The protein belongs to the bacterial ribosomal protein bL17 family. In terms of assembly, part of the 50S ribosomal subunit. Contacts protein L32.

The sequence is that of Large ribosomal subunit protein bL17 from Chlorobium phaeobacteroides (strain BS1).